The primary structure comprises 187 residues: MISTSEFKKGLKIEYKGEPYEIIDFQHVKMQQRAPIVRTKIKHLKTGRVLEENFPAGEKFEKPELEEKQMQYLYSQGDSYVFMDMESYEQISIPKERIGDAIYYIKDEMIVDVIYYKGEPLVIEPPMFVELRVAETEPAFKGDTASGGTKPAKLETGLTVKVPFHIQTGDLLKIDTRTGEYIEKVKE.

The protein belongs to the elongation factor P family.

The protein resides in the cytoplasm. Its pathway is protein biosynthesis; polypeptide chain elongation. In terms of biological role, involved in peptide bond synthesis. Stimulates efficient translation and peptide-bond synthesis on native or reconstituted 70S ribosomes in vitro. Probably functions indirectly by altering the affinity of the ribosome for aminoacyl-tRNA, thus increasing their reactivity as acceptors for peptidyl transferase. This chain is Elongation factor P, found in Thermodesulfovibrio yellowstonii (strain ATCC 51303 / DSM 11347 / YP87).